The sequence spans 138 residues: Probable lactoylglutathione lyase (138 aa).

The VOC domain occupies 5–129 (RILHTMLRVG…DGYMIELIQN (125 aa)). His8 contacts Ni(2+). Arg12 serves as a coordination point for substrate. Glu59 is a binding site for Ni(2+). The substrate site is built by Asn63 and His77. The Ni(2+) site is built by His77 and Glu125. Glu125 (proton donor/acceptor) is an active-site residue.

This sequence belongs to the glyoxalase I family. Requires Ni(2+) as cofactor.

It carries out the reaction (R)-S-lactoylglutathione = methylglyoxal + glutathione. It functions in the pathway secondary metabolite metabolism; methylglyoxal degradation; (R)-lactate from methylglyoxal: step 1/2. Catalyzes the conversion of hemimercaptal, formed from methylglyoxal and glutathione, to S-lactoylglutathione. The sequence is that of Probable lactoylglutathione lyase (gloA) from Vibrio parahaemolyticus serotype O3:K6 (strain RIMD 2210633).